Here is a 282-residue protein sequence, read N- to C-terminus: Undecaprenyl-diphosphatase (282 aa).

The next 8 helical transmembrane spans lie at 1–21 (MNLF…FLPI), 40–60 (GAAF…IYFA), 89–109 (WMIA…KHEI), 112–132 (VLRS…VLVV), 153–173 (LSWT…IPGS), 196–216 (FSFL…LYQT), 228–248 (LNLA…IAFL), and 258–278 (GIFI…IGTG).

It belongs to the UppP family.

It localises to the cell inner membrane. The catalysed reaction is di-trans,octa-cis-undecaprenyl diphosphate + H2O = di-trans,octa-cis-undecaprenyl phosphate + phosphate + H(+). In terms of biological role, catalyzes the dephosphorylation of undecaprenyl diphosphate (UPP). Confers resistance to bacitracin. This chain is Undecaprenyl-diphosphatase, found in Chlorobaculum tepidum (strain ATCC 49652 / DSM 12025 / NBRC 103806 / TLS) (Chlorobium tepidum).